We begin with the raw amino-acid sequence, 205 residues long: Regulator of G-protein signaling 4 (205 aa).

3 S-palmitoyl cysteine lipidation sites follow: Cys2, Cys12, and Cys95. Positions Ser62 to Val178 constitute an RGS domain.

In terms of processing, palmitoylated on Cys-2 and/or Cys-12. Phosphorylated by cyclic GMP-dependent protein kinase.

Inhibits signal transduction by increasing the GTPase activity of G protein alpha subunits thereby driving them into their inactive GDP-bound form. Activity on G(z)-alpha is inhibited by phosphorylation of the G-protein. Activity on G(z)-alpha and G(i)-alpha-1 is inhibited by palmitoylation of the G-protein. The chain is Regulator of G-protein signaling 4 (RGS4) from Bos taurus (Bovine).